A 530-amino-acid chain; its full sequence is Copine-D (530 aa).

2 consecutive C2 domains span residues 1-122 and 130-248; these read MNPI…RMKM and LSGS…EFEI. The Ca(2+) site is built by Asp25, Asp31, Asp85, Asp87, and Asp100. The VWFA domain occupies 289–507; sequence NLMVAIDCTA…ALAHETLKEI (219 aa).

The protein belongs to the copine family. The cofactor is Ca(2+).

This is Copine-D (cpnD) from Dictyostelium discoideum (Social amoeba).